A 305-amino-acid chain; its full sequence is Homoserine O-acetyltransferase (305 aa).

C142 (acyl-thioester intermediate) is an active-site residue. 2 residues coordinate substrate: K163 and S192. H235 serves as the catalytic Proton acceptor. The active site involves E237. R249 lines the substrate pocket.

It belongs to the MetA family.

It is found in the cytoplasm. The catalysed reaction is L-homoserine + acetyl-CoA = O-acetyl-L-homoserine + CoA. Its pathway is amino-acid biosynthesis; L-methionine biosynthesis via de novo pathway; O-acetyl-L-homoserine from L-homoserine: step 1/1. In terms of biological role, transfers an acetyl group from acetyl-CoA to L-homoserine, forming acetyl-L-homoserine. This chain is Homoserine O-acetyltransferase, found in Hyphomonas neptunium (strain ATCC 15444).